Reading from the N-terminus, the 305-residue chain is Oxidoreductase swnR (305 aa).

Belongs to the NmrA-type oxidoreductase family. Isoflavone reductase subfamily.

It catalyses the reaction L-pipecolate + O2 = L-1-piperideine-6-carboxylate + H2O2 + H(+). It participates in mycotoxin biosynthesis. Its function is as follows. Oxidoreductase; part of the gene cluster that mediates the biosynthesis of swainsonine (SW), a cytotoxic fungal alkaloid and a potential cancer therapy drug. Swainsonine production occurs via a multibranched pathway and is dispensable for fungal colonization of plants and infection of insect hosts. The first step of swainsonine biosynthesis is the production of the precursor pipecolic acid (PA) via conversion of L-lysine (Lys) to 1-piperideine-6-carboxylate (P6C) by the aminotransferase swnA, the latter being further reduced to PA by the reductase swnR. The PKS-NRPS hybrid synthetase swnK uptakes and condensates PA and malonyl-CoA with and without skipping of the ketoreductase (KR) domain in order to produce 3 intermediates, 1-oxoindolizidine, (1S)-1-hydroxyindolizin, and (1R)-1-hydroxyindolizine; with the transisomer (1S)-1-hydroxyindolizin being predominant. The terminal thioester reductase (TE) domain of swnK is involved in reduction of the thioester bond to release the intermediate aldehydes. The oxidoreductase swnN could contribute to the reduction of 1-oxoindolizidine to (1S)-1-hydroxyindolizin and (1R)-1-hydroxyindolizine, contributing to the major route of SW production. The dioxygenase swnH2 would be responsible for the oxidization of (1R)-1-hydroxyindolizine into (1R,2S)-1,2-dihydroxyindolizine and of (1S)-1-hydroxyindolizin to yield both (1R,2S)-1,2-dihydroxyindolizine and (1S,2S)-1,2-dihydroxyindolizine. The dioxygenase swnH1 then performs the conversion of the 1,2-dihydroxyindolizine epimers to SW. The sequence is that of Oxidoreductase swnR from Arthroderma benhamiae (strain ATCC MYA-4681 / CBS 112371) (Trichophyton mentagrophytes).